A 257-amino-acid chain; its full sequence is Phosphonates import ATP-binding protein PhnC (257 aa).

One can recognise an ABC transporter domain in the interval 4–248; sequence IKFKNVSKVY…VFSKIYGRTI (245 aa). An ATP-binding site is contributed by 37–44; sequence GLSGAGKS.

Belongs to the ABC transporter superfamily. Phosphonates importer (TC 3.A.1.9.1) family. As to quaternary structure, the complex is composed of two ATP-binding proteins (PhnC), two transmembrane proteins (PhnE) and a solute-binding protein (PhnD).

It is found in the cell membrane. The enzyme catalyses phosphonate(out) + ATP + H2O = phosphonate(in) + ADP + phosphate + H(+). In terms of biological role, part of the ABC transporter complex PhnCDE involved in phosphonates import. Responsible for energy coupling to the transport system. This Staphylococcus aureus (strain MRSA252) protein is Phosphonates import ATP-binding protein PhnC.